Reading from the N-terminus, the 346-residue chain is MNFKTLTMQWTGNSLILVDQRKLPHVVNYVECKSYAEVARAIKDMVVRGAPAIGATAAFGYVLGAKEAATLKNQNFIDVMKNVYDVLASTRPTAVNLFWALNRMEKCVDLSKAVDEILEDLEKEAIKIAEEDIRINKTIGTHGQTLLKDGCAVLTHCNAGALATVDYGTALGVIRAAVESGKKIKVYVDETRPYLQGARLTAWELLEIGVETILITDNMAGWVMKQGKIDAVIVGADRIAANGDVANKIGTYSVAVLSNQHGIPFYVAAPTSTIDIKIKNGSEIPIEERSHDEVTHVHGVKVAPDGVAVYNPAFDVTEHQLITAIITEKGILRPPYKENIAKLFGG.

Residues 48–50 (RGA), Arg-91, and Gln-196 contribute to the substrate site. Asp-237 serves as the catalytic Proton donor. A substrate-binding site is contributed by 247–248 (NK).

This sequence belongs to the eIF-2B alpha/beta/delta subunits family. MtnA subfamily.

The catalysed reaction is 5-(methylsulfanyl)-alpha-D-ribose 1-phosphate = 5-(methylsulfanyl)-D-ribulose 1-phosphate. It participates in amino-acid biosynthesis; L-methionine biosynthesis via salvage pathway; L-methionine from S-methyl-5-thio-alpha-D-ribose 1-phosphate: step 1/6. Functionally, catalyzes the interconversion of methylthioribose-1-phosphate (MTR-1-P) into methylthioribulose-1-phosphate (MTRu-1-P). The polypeptide is Methylthioribose-1-phosphate isomerase 1 (Pseudothermotoga lettingae (strain ATCC BAA-301 / DSM 14385 / NBRC 107922 / TMO) (Thermotoga lettingae)).